A 450-amino-acid polypeptide reads, in one-letter code: RUN domain-containing protein 3B (450 aa).

Residues 48–180 enclose the RUN domain; sequence DDTSAEFINF…IDFSFCLKGE (133 aa). A disordered region spans residues 203–225; it reads DSISSDEEEMRTLGSSGSEAGTP. A coiled-coil region spans residues 291 to 317; it reads ISHKLEKEQLEIIILELQDQLTVLKNH.

This sequence belongs to the RUNDC3 family.

This chain is RUN domain-containing protein 3B (rundc3b), found in Danio rerio (Zebrafish).